A 255-amino-acid polypeptide reads, in one-letter code: Large ribosomal subunit protein uL4 (255 aa).

It belongs to the universal ribosomal protein uL4 family. Part of the 50S ribosomal subunit.

Its function is as follows. One of the primary rRNA binding proteins, this protein initially binds near the 5'-end of the 23S rRNA. It is important during the early stages of 50S assembly. It makes multiple contacts with different domains of the 23S rRNA in the assembled 50S subunit and ribosome. Forms part of the polypeptide exit tunnel. The chain is Large ribosomal subunit protein uL4 from Thermococcus kodakarensis (strain ATCC BAA-918 / JCM 12380 / KOD1) (Pyrococcus kodakaraensis (strain KOD1)).